We begin with the raw amino-acid sequence, 254 residues long: MTTIDLNCDLGESFGAYKMGNDDEILPFVSSINVACGFHAGDPAVMRQTVEKALQHNVAIGAHPGFPDLIGFGRRNMSVSASEVYDYVLYQIGALDGFVKAAGGKMQHVKPHGALYNMAVTDSEIADAIAKAIYHINPGLLLYGLANSEAFIKATEKYNITLVQEAFADRTYKQDGTLTSRTEENALIKNEDEAIKQVLQMVKEGYVESVNGGKVAVQAQTICLHGDGEKAVQFAEKIYRTFKLNGISICAPNK.

Belongs to the LamB/PxpA family. In terms of assembly, forms a complex composed of PxpA, PxpB and PxpC.

It carries out the reaction 5-oxo-L-proline + ATP + 2 H2O = L-glutamate + ADP + phosphate + H(+). Catalyzes the cleavage of 5-oxoproline to form L-glutamate coupled to the hydrolysis of ATP to ADP and inorganic phosphate. The sequence is that of 5-oxoprolinase subunit A from Bacillus mycoides (strain KBAB4) (Bacillus weihenstephanensis).